Consider the following 284-residue polypeptide: Tropomyosin (284 aa).

Residues 1–284 (MDAIKKKMQA…DMTFTELIGN (284 aa)) adopt a coiled-coil conformation.

Belongs to the tropomyosin family. Homodimer.

In terms of biological role, tropomyosin, in association with the troponin complex, plays a central role in the calcium dependent regulation of muscle contraction. The protein is Tropomyosin of Periplaneta fuliginosa (Smokybrown cockroach).